Here is a 370-residue protein sequence, read N- to C-terminus: Glycerophosphodiester phosphodiesterase GDPD3 (370 aa).

The GP-PDE domain occupies 35–322 (FVLMGHRGFG…DMVKDISEAI (288 aa)).

It belongs to the glycerophosphoryl diester phosphodiesterase family. Expressed in flowers and siliques.

It carries out the reaction a sn-glycero-3-phosphodiester + H2O = an alcohol + sn-glycerol 3-phosphate + H(+). This chain is Glycerophosphodiester phosphodiesterase GDPD3, found in Arabidopsis thaliana (Mouse-ear cress).